The following is a 308-amino-acid chain: Ribosomal RNA large subunit methyltransferase F (308 aa).

The protein belongs to the methyltransferase superfamily. METTL16/RlmF family.

The protein resides in the cytoplasm. The catalysed reaction is adenosine(1618) in 23S rRNA + S-adenosyl-L-methionine = N(6)-methyladenosine(1618) in 23S rRNA + S-adenosyl-L-homocysteine + H(+). In terms of biological role, specifically methylates the adenine in position 1618 of 23S rRNA. This Salmonella schwarzengrund (strain CVM19633) protein is Ribosomal RNA large subunit methyltransferase F.